A 632-amino-acid polypeptide reads, in one-letter code: tRNA uridine 5-carboxymethylaminomethyl modification enzyme MnmG (632 aa).

FAD is bound by residues 15–20, Val-127, and Ser-182; that span reads GAGHAG. Positions 203–226 are disordered; it reads TPPRVKSSTIDYSKTEEQPGDDHP. Over residues 215–226 the composition is skewed to basic and acidic residues; it reads SKTEEQPGDDHP. NAD(+) is bound at residue 274 to 288; the sequence is GARYCPSIEDKIVRF. Gln-371 lines the FAD pocket.

Belongs to the MnmG family. As to quaternary structure, homodimer. Heterotetramer of two MnmE and two MnmG subunits. FAD is required as a cofactor.

The protein resides in the cytoplasm. NAD-binding protein involved in the addition of a carboxymethylaminomethyl (cmnm) group at the wobble position (U34) of certain tRNAs, forming tRNA-cmnm(5)s(2)U34. The sequence is that of tRNA uridine 5-carboxymethylaminomethyl modification enzyme MnmG from Listeria monocytogenes serotype 4b (strain F2365).